The chain runs to 2104 residues: MESQEFIVLYTHQKMKKSKVWQDGILKITHLGNKAILYDDKGACLESLFLKCLEVKPGDDLESDRYLITVEEVKVAGAIGIVKQNVNKEAPELNSRTFISSGRSLGCQPSGLKRKFTGFQGPRQVPKKMVIMESGESAASHEAKKTGPTIFSPFCSMPPLFPTVGKKDVNNILADPENIVTYKNRERNAMDFSSVFSPSFQINPEVLCEENYFCSPVNSGNKLSDSLLTNEPVKRDSLASHYSGVSQNIRSKAQILALLKSESSSSCEELNSEMTEHFPQKQPQGSLKIATKPKYLIQQEECAEMKSTENLYYQHQSENTMRNKSRWAMYLSSQSSPIHSSTVDGNDTERKPKAQEDDVNSNLKDLSLQKIIQFVETYAEERKKYNVDQSVGNNDPSWNQEVKLEIPSFNESSSLQVTCSSAENDGILSESDIQEDNKIPFNQNDKGCIKGSVLIKENAQEVNTCGTLEKEYEQSESSLPELKHLQIESSNNSRISDDITDMISESKMDNESLNSIHESLSNVTQPFLEVTFNLNNFETSDTEEESQESNKISQDSESWVKDILVNDGNSCFQKRSENTNCEEIEGEHLPFLTSVSDKPTVTFPVKETLPSQFCDKTYVGFDMGICKTENTGKEIEEYSDTLSNFESFKWTDAVYGDNKEDANKPIQEVRINYDFALPPNKSKGINMNLHIPHIQNQIAENSNLFSEDAQPQPFILGSDLDKNDEHVLPSTSSSDNSVQLLNTNQNHYECIALDKSNTHISNSLFYPLGKKHLISKDTEAHISEPEDLGKIRSPPPDHVEVETAREGKQYWNPRNSSELSGLVNTISILKSLCEHSTALDSLEILKKKNTVFQQGTQQTYEPDSPPEVRKPFITVVSPKSPHLHKDSQQILKEDEVELSEPLQSVQFSSSGSKEETAFQAVIPKQIERKTCDPKPVEFQGHQVKGSATSGVMVRGHSSQLGCSQFPDSTEYENFMTETPELPSTCMQIDFLQVTSPEENISTLSPVSTFSLNSRDEDFMVEFSETSLKARTLPDDLHFLNLEGMKKSRSLENENLQRLSLLSRTQVPLITLPRTDGPPDLDSHSYMINSNTYESSGSPMLNLCEKSAVLSFSIEPEDQNETFFSEESREVNPGDVSLNNISTQSKWLKYQNTSQCNVATPNRVDKRITDGFFAEAVSGMHFRDTSERQSDAVNESSLDSVHLQMIKGMLYQQRQDFSSQDSVSRKKVLSLNLKQTSKTEEIKNVLGGSTCYNYSVKDLQEISGSELCFPSGQKIKSAYLPQRQIHIPAVFQSPAHYKQTFTSCLIEHLNILLFGLAQNLQKALSKVDISFYTSLKGEKLKNAENNVPSCHHSQPAKLVMVKKEGPNKGRLFYTCDGPKADRCKFFKWLEDVTPGYSTQEGARPGMVLSDIKSIGLYLRSQKIPLYEECQLLVRKGFDFQRKQYGKLKKFTTVNPEFYNEPKTKLYLKLSRKERSSAYSKNDLWVVSKTLDFELDTFIACSAFFGPSSINEIEILPLKGYFPSNWPTNMVVHALLVCNASTELTTLKNIQDYFNPATLPLTQYLLTTSSPTIVSNKRVSKRKFIPPAFTNVSTKFELLSLGATLKLASELIQVHKLNKDQATALIQIAQMMASHESIEEVKELQTHTFPITIIHGVFGAGKSYLLAVVILFFVQLFEKSEAPTIGNARPWKLLISSSTNVAVDRVLLGLLSLGFENFIRVGSVRKIAKPILPYSLHAGSENESEQLKELHALMKEDLTPTERVYVRKSIEQHKLGTNRTLLKQVRVVGVTCAACPFPCMNDLKFPVVVLDECSQITEPASLLPIARFECEKLILVGDPKQLPPTIQGSDAAHENGLEQTLFDRLCLMGHKPILLRTQYRCHPAISAIANDLFYKGALMNGVTEIERSPLLEWLPTLCFYNVKGLEQIERDNSFHNVAEATFTLKLIQSLIASGIAGSMIGVITLYKSQMYKLCHLLSAVDFHHPDIKTVQVSTVDAFQGAEKEIIILSCVRTRQVGFIDSEKRMNVALTRGKRHLLIVGNLACLRKNQLWGRVIQHCEGREDGLQHANQYEPQLNHLLKDYFEKQVEEKQKKKSEKEKSKDKSHS.

The segment covering 335–345 has biased composition (polar residues); the sequence is SSPIHSSTVDG. The tract at residues 335–359 is disordered; the sequence is SSPIHSSTVDGNDTERKPKAQEDDV. S336 is subject to Phosphoserine. Positions 347–356 are enriched in basic and acidic residues; that stretch reads DTERKPKAQE. S793 and S864 each carry phosphoserine. C1349, H1351, C1374, and C1382 together coordinate Zn(2+). A GRF-type zinc finger spans residues 1349-1391; sequence CHHSQPAKLVMVKKEGPNKGRLFYTCDGPKADRCKFFKWLEDV. The interval 2085–2104 is disordered; that stretch reads VEEKQKKKSEKEKSKDKSHS.

Interacts with DNA repair protein RAD51; the interaction promotes RAD51 strand exchange activity. Also interacts with DNA repair proteins EXO1 and BRCA1; the interactions are increased following DNA damage induction.

The protein resides in the nucleus. The enzyme catalyses ATP + H2O = ADP + phosphate + H(+). It carries out the reaction Couples ATP hydrolysis with the unwinding of duplex DNA at the replication fork by translocating in the 5'-3' direction. This creates two antiparallel DNA single strands (ssDNA). The leading ssDNA polymer is the template for DNA polymerase III holoenzyme which synthesizes a continuous strand.. Functionally, 5'-3' DNA helicase which is recruited to sites of DNA damage and promotes repair of replication-blocking DNA lesions through stimulation of homologous recombination (HR). Promotes HR by directly stimulating RAD51-mediated strand exchange activity. Not required to load RAD51 at sites of DNA damage but promotes recombinational repair after RAD51 recruitment. Also promotes HR by positively regulating EXO1-mediated DNA end resection of double-strand breaks. Required for recruitment of replication protein RPA2 to DNA damage sites. Promotes the initiation of the G2/M checkpoint but not its maintenance. Catalyzes Holliday junction branch migration and dissociation of D-loops and DNA flaps. The sequence is that of 5'-3' DNA helicase ZGRF1 (ZGRF1) from Homo sapiens (Human).